A 245-amino-acid polypeptide reads, in one-letter code: 3-deoxy-manno-octulosonate cytidylyltransferase (245 aa).

Belongs to the KdsB family.

It localises to the cytoplasm. It catalyses the reaction 3-deoxy-alpha-D-manno-oct-2-ulosonate + CTP = CMP-3-deoxy-beta-D-manno-octulosonate + diphosphate. The protein operates within nucleotide-sugar biosynthesis; CMP-3-deoxy-D-manno-octulosonate biosynthesis; CMP-3-deoxy-D-manno-octulosonate from 3-deoxy-D-manno-octulosonate and CTP: step 1/1. It functions in the pathway bacterial outer membrane biogenesis; lipopolysaccharide biosynthesis. Activates KDO (a required 8-carbon sugar) for incorporation into bacterial lipopolysaccharide in Gram-negative bacteria. The polypeptide is 3-deoxy-manno-octulosonate cytidylyltransferase (Rhodopseudomonas palustris (strain BisB18)).